Consider the following 546-residue polypeptide: Src substrate cortactin (546 aa).

A disordered region spans residues 1 to 28; that stretch reads MWKASAGHAVSITQDDGGADDWETDPDF. Over residues 17–28 the composition is skewed to acidic residues; the sequence is GGADDWETDPDF. 6 Cortactin repeats span residues 80-116, 117-153, 154-190, 191-227, 228-264, and 265-301; these read ASHG…SQVD, SVRG…SQKD, YSSG…SQKD, YSKG…SQKD, YVKG…SQKD, and YKTG…SQQD. N6-acetyllysine occurs at positions 87 and 107. Position 113 is a phosphoserine (serine 113). Arginine 119 is modified (omega-N-methylarginine). Residue lysine 124 is modified to N6-acetyllysine. At lysine 144 the chain carries N6-acetyllysine; alternate. A Glycyl lysine isopeptide (Lys-Gly) (interchain with G-Cter in SUMO1); alternate cross-link involves residue lysine 144. Lysine 144 is covalently cross-linked (Glycyl lysine isopeptide (Lys-Gly) (interchain with G-Cter in SUMO2); alternate). Serine 150 is subject to Phosphoserine. N6-acetyllysine is present on residues lysine 152, lysine 161, and lysine 171. At lysine 181 the chain carries N6-acetyllysine; alternate. Lysine 181 participates in a covalent cross-link: Glycyl lysine isopeptide (Lys-Gly) (interchain with G-Cter in SUMO1); alternate. Lysine 181 participates in a covalent cross-link: Glycyl lysine isopeptide (Lys-Gly) (interchain with G-Cter in SUMO2); alternate. N6-acetyllysine is present on residues lysine 193 and lysine 198. Residue lysine 218 forms a Glycyl lysine isopeptide (Lys-Gly) (interchain with G-Cter in SUMO1) linkage. N6-acetyllysine is present on lysine 235. The residue at position 261 (serine 261) is a Phosphoserine. N6-acetyllysine is present on lysine 272. At lysine 295 the chain carries N6-acetyllysine; alternate. Lysine 295 is covalently cross-linked (Glycyl lysine isopeptide (Lys-Gly) (interchain with G-Cter in SUMO2); alternate). The Cortactin 7; truncated repeat unit spans residues 302 to 324; the sequence is YAKGFGGKYGVQKDRMDKNASTF. N6-acetyllysine occurs at positions 304, 309, 314, and 346. Positions 348–401 form a coiled coil; the sequence is SNIRANFENLAKEREQEDRRKAEAERAQRMAKERQEQEEARRKLEEQARAKKQT. Residues 355–424 are disordered; that stretch reads ENLAKEREQE…PPSSPIYEDA (70 aa). Residues 357 to 396 are compositionally biased toward basic and acidic residues; that stretch reads LAKEREQEDRRKAEAERAQRMAKERQEQEEARRKLEEQAR. Threonine 401 is modified (phosphothreonine). A phosphoserine mark is found at serine 405, serine 407, serine 417, and serine 418. Residues tyrosine 421 and tyrosine 442 each carry the phosphotyrosine modification. The residue at position 443 (serine 443) is a Phosphoserine. Tyrosine 466 carries the post-translational modification Phosphotyrosine; by FAK1. Tyrosine 482 and tyrosine 485 each carry phosphotyrosine; by SRC. The 59-residue stretch at 488–546 folds into the SH3 domain; that stretch reads DLGITAIALYDYQAAGDDEISFDPDDIITNIEMIDDGWWRGVCKGRYGLFPANYVELRQ.

In terms of assembly, part of a complex composed of NEDD9, AURKA and CTTN; within the complex NEDD9 acts as a scaffold protein and is required for complex formation. Interacts (via N-terminus) with NEDD9. Identified in a complex containing FGFR4, NCAM1, CDH2, PLCG1, FRS2, SRC, SHC1, GAP43 and CTTN. Forms a complex with ABL1 and MYLK. Interacts with SHANK2 and SHANK3 (via its SH3 domain). Interacts with PLXDC2 and SRCIN1. Interacts with SAMSN1 (via SH3 domain). Interacts (via SH3 domain) with ASAP1 (via Pro-rich region). Interacts (via SH3 domain) with DNM2. Interacts with ACTN1. Interacts with FER. Interacts with KCNA2 (via non-phosphorylated C-terminus). Interacts with FGD1. Interacts with ABL2. Interacts with CTTNBP2NL; this interaction may target CTTN to stress fibers. Interacts with CTTNBP2; this interaction may target CTTN at the cell cortex or dendritic spines. Interacts with KCNH1. Interacts (via SH3 domain) with DIP2A (via N-terminus); the interaction enhances CTTN acetylation and is required for proper synaptic transmission. Interacts with XIRP1 (via N-terminus); the interaction promotes CTTN localization to intercalated disks in cardiomyocytes. Acetylated. In terms of processing, phosphorylated by FER. Phosphorylated in response to FGR activation. Phosphorylation by SRC promotes MYLK binding. Phosphorylated on tyrosine residues in response to CHRM1 activation. Phosphorylated by PTK2/FAK1 in response to cell adhesion. Tyrosine phosphorylation in transformed cells may contribute to cellular growth regulation and transformation. Phosphorylated by PKN2 at both serine and threonine residues in a GTP-bound Rac1-dependent manner in hyaluronan-induced astrocytes and hence down-regulated CTTN ability to associate with filamentous actin. Expressed at intercalated disks in the heart (at protein level). Expressed in most tissues, except in B-lymphocytes or plasma cells.

The protein localises to the cytoplasm. The protein resides in the cytoskeleton. It localises to the cell projection. It is found in the lamellipodium. Its subcellular location is the ruffle. The protein localises to the dendrite. The protein resides in the cell membrane. It localises to the podosome. It is found in the cell junction. Its subcellular location is the focal adhesion. The protein localises to the membrane. The protein resides in the clathrin-coated pit. It localises to the dendritic spine. It is found in the cell cortex. Its subcellular location is the endoplasmic reticulum. In terms of biological role, contributes to the organization of the actin cytoskeleton and cell shape. Plays a role in the formation of lamellipodia and in cell migration. Plays a role in the regulation of neuron morphology, axon growth and formation of neuronal growth cones. Through its interaction with CTTNBP2, involved in the regulation of neuronal spine density. Plays a role in focal adhesion assembly and turnover. In complex with ABL1 and MYLK regulates cortical actin-based cytoskeletal rearrangement critical to sphingosine 1-phosphate (S1P)-mediated endothelial cell (EC) barrier enhancement. Plays a role in intracellular protein transport and endocytosis, and in modulating the levels of potassium channels present at the cell membrane. Plays a role in receptor-mediated endocytosis via clathrin-coated pits. Required for stabilization of KCNH1 channels at the cell membrane. This chain is Src substrate cortactin (Cttn), found in Mus musculus (Mouse).